The chain runs to 360 residues: Phospho-N-acetylmuramoyl-pentapeptide-transferase (360 aa).

A run of 10 helical transmembrane segments spans residues A26–E46, M74–G94, Y97–Y117, Y134–N154, V168–S188, G199–S219, S236–F256, V263–L283, I288–V308, and V338–K358.

This sequence belongs to the glycosyltransferase 4 family. MraY subfamily. Requires Mg(2+) as cofactor.

Its subcellular location is the cell inner membrane. It catalyses the reaction UDP-N-acetyl-alpha-D-muramoyl-L-alanyl-gamma-D-glutamyl-meso-2,6-diaminopimeloyl-D-alanyl-D-alanine + di-trans,octa-cis-undecaprenyl phosphate = di-trans,octa-cis-undecaprenyl diphospho-N-acetyl-alpha-D-muramoyl-L-alanyl-D-glutamyl-meso-2,6-diaminopimeloyl-D-alanyl-D-alanine + UMP. It functions in the pathway cell wall biogenesis; peptidoglycan biosynthesis. Catalyzes the initial step of the lipid cycle reactions in the biosynthesis of the cell wall peptidoglycan: transfers peptidoglycan precursor phospho-MurNAc-pentapeptide from UDP-MurNAc-pentapeptide onto the lipid carrier undecaprenyl phosphate, yielding undecaprenyl-pyrophosphoryl-MurNAc-pentapeptide, known as lipid I. This Shewanella oneidensis (strain ATCC 700550 / JCM 31522 / CIP 106686 / LMG 19005 / NCIMB 14063 / MR-1) protein is Phospho-N-acetylmuramoyl-pentapeptide-transferase.